Reading from the N-terminus, the 388-residue chain is Na(+)/H(+) antiporter NhaA (388 aa).

11 helical membrane passes run 14–34 (GGII…MGAT), 59–79 (MLLW…GLEV), 95–115 (VFPV…YLAF), 125–145 (GWAI…ALLG), 154–174 (IFLM…IALF), 179–199 (LSIV…LLNL), 219–239 (VLKS…FIPL), 254–274 (ILHP…NAGV), 292–312 (IIAG…WLAL), 328–348 (IMAV…IASL), and 356–376 (ALIN…AVVG).

The protein belongs to the NhaA Na(+)/H(+) (TC 2.A.33) antiporter family.

The protein resides in the cell inner membrane. The catalysed reaction is Na(+)(in) + 2 H(+)(out) = Na(+)(out) + 2 H(+)(in). In terms of biological role, na(+)/H(+) antiporter that extrudes sodium in exchange for external protons. The polypeptide is Na(+)/H(+) antiporter NhaA (Salmonella arizonae (strain ATCC BAA-731 / CDC346-86 / RSK2980)).